The chain runs to 109 residues: MDIWKPEIKYLRYTNGFNVSELEDACFKFNYKFPKVGYCRVPSHAWCRNQGSFCATLTLYGKSKHYDKYFGVITGFTAFANTVEEAVNKLVFLAVDFITWRRQELNVHG.

This sequence belongs to the coronaviruses ns12.7 protein family.

The chain is Non-structural protein of 12.7 kDa from Bovine coronavirus (strain 98TXSF-110-LUN) (BCoV-LUN).